The primary structure comprises 64 residues: Alpha-conotoxin CnIL (64 aa).

The N-terminal stretch at 1-21 is a signal peptide; the sequence is MGMRMMFTVFLLVVLTTTVVS. Positions 22 to 49 are excised as a propeptide; the sequence is FPSDSASDGRDDEAKDERSDIYESKRDG. Disulfide bonds link cysteine 51-cysteine 56 and cysteine 52-cysteine 62. A Cysteine amide modification is found at cysteine 62.

It belongs to the conotoxin A superfamily. As to expression, expressed by the venom duct.

The protein resides in the secreted. The polypeptide is Alpha-conotoxin CnIL (Conus consors (Singed cone)).